Reading from the N-terminus, the 231-residue chain is 7-cyano-7-deazaguanine synthase (231 aa).

8 to 18 contacts ATP; it reads FSGGQDSTTCL. Residues cysteine 188, cysteine 197, cysteine 200, and cysteine 203 each contribute to the Zn(2+) site.

The protein belongs to the QueC family. Zn(2+) serves as cofactor.

The catalysed reaction is 7-carboxy-7-deazaguanine + NH4(+) + ATP = 7-cyano-7-deazaguanine + ADP + phosphate + H2O + H(+). It functions in the pathway purine metabolism; 7-cyano-7-deazaguanine biosynthesis. Functionally, catalyzes the ATP-dependent conversion of 7-carboxy-7-deazaguanine (CDG) to 7-cyano-7-deazaguanine (preQ(0)). The chain is 7-cyano-7-deazaguanine synthase from Erwinia tasmaniensis (strain DSM 17950 / CFBP 7177 / CIP 109463 / NCPPB 4357 / Et1/99).